Consider the following 1120-residue polypeptide: TBC1 domain family member 8B (1120 aa).

2 GRAM domains span residues 145–212 (LKFE…EKTS) and 285–353 (EQFN…DKTN). The Rab-GAP TBC domain maps to 487 to 674 (GIPETLRGEL…NVVDCFFYDG (188 aa)). The EF-hand domain occupies 858-893 (NKDSLALWTFRLLDENSDCLINFKEFSSAIDIMYNG). The tract at residues 1035-1066 (SPTSSAKGFSGTVCGSGGPSEEKTGSHLEKDP) is disordered. A compositionally biased stretch (basic and acidic residues) spans 1054-1066 (SEEKTGSHLEKDP).

Interacts (via domain Rab-GAP TBC) with RAB11B (in GTP-bound form). Kidney (at protein level).

The protein localises to the cytoplasm. The protein resides in the cytosol. In terms of biological role, involved in vesicular recycling, probably as a RAB11B GTPase-activating protein. This is TBC1 domain family member 8B (TBC1D8B) from Homo sapiens (Human).